Here is a 354-residue protein sequence, read N- to C-terminus: MKSLLLLVLISICWADHLSDNYTLDHDRAIHIQAENGPHLLVEAEQAKVFSHRGGNVTLPCKFYRDPTAFGSGIHKIRIKWTKLTSDYLKEVDVFVSMGYHKKTYGGYQGRVFLKGGSDSDASLVITDLTLEDYGRYKCEVIEGLEDDTVVVALDLQGVVFPYFPRLGRYNLNFHEAQQACLDQDAVIASFDQLYDAWRGGLDWCNAGWLSDGSVQYPITKPREPCGGQNTVPGVRNYGFWDKDKSRYDVFCFTSNFNGRFYYLIHPTKLTYDEAVQACLNDGAQIAKVGQIFAAWKILGYDRCDAGWLADGSVRYPISRPRRRCSPTEAAVRFVGFPDKKHKLYGVYCFRAYN.

A propeptide spanning residues 1–15 is cleaved from the precursor; the sequence is MKSLLLLVLISICWA. N-linked (GlcNAc...) asparagine glycans are attached at residues N21 and N56. The region spanning 38 to 152 is the Ig-like V-type domain; that stretch reads PHLLVEAEQA…EGLEDDTVVV (115 aa). Intrachain disulfides connect C61/C139, C181/C252, C205/C226, C279/C349, and C304/C325. 2 consecutive Link domains span residues 159–254 and 259–351; these read VVFP…FCFT and GRFY…YCFR.

The protein belongs to the HAPLN family. Widely expressed. Weakly expressed in the brain.

Its subcellular location is the secreted. The protein localises to the extracellular space. The protein resides in the extracellular matrix. Its function is as follows. Stabilizes the aggregates of proteoglycan monomers with hyaluronic acid in the extracellular cartilage matrix. In Homo sapiens (Human), this protein is Hyaluronan and proteoglycan link protein 1 (HAPLN1).